A 549-amino-acid chain; its full sequence is Ceramide kinase 1 (549 aa).

The 155-residue stretch at 162-316 folds into the DAGKc domain; sequence NRPKNIIIFI…VDVCTVHQHQ (155 aa). Residues 172–174 and 205–209 contribute to the ATP site; these read NPF and TERAN. 233 to 236 provides a ligand contact to substrate; sequence GGDG. Catalysis depends on D235, which acts as the Proton donor/acceptor. ATP is bound by residues E240, 277–279, R342, R348, and 500–502; these read GSA and DGE.

It catalyses the reaction an N-acylsphing-4-enine + ATP = an N-acylsphing-4-enine 1-phosphate + ADP + H(+). The catalysed reaction is an N-acyl-15-methylhexadecasphing-4-enine + ATP = an N-acyl-15-methylhexadecasphing-4-enine-1-phosphate + ADP + H(+). The protein operates within lipid metabolism; sphingolipid metabolism. In terms of biological role, catalyzes the phosphorylation of ceramide to form ceramide 1-phosphate. C.elegans contain specific sphingoid bases, which are unique or different in structure compared to the sphingoid bases found in other animals. Two examples of these distinctive compounds are: 15-methylhexadecasphinganine and 15-methylhexadecasphing-4-enine. The chain is Ceramide kinase 1 from Caenorhabditis elegans.